A 175-amino-acid polypeptide reads, in one-letter code: ATP synthase subunit delta (175 aa).

It belongs to the ATPase delta chain family. As to quaternary structure, F-type ATPases have 2 components, F(1) - the catalytic core - and F(0) - the membrane proton channel. F(1) has five subunits: alpha(3), beta(3), gamma(1), delta(1), epsilon(1). F(0) has three main subunits: a(1), b(2) and c(10-14). The alpha and beta chains form an alternating ring which encloses part of the gamma chain. F(1) is attached to F(0) by a central stalk formed by the gamma and epsilon chains, while a peripheral stalk is formed by the delta and b chains.

Its subcellular location is the cell inner membrane. Its function is as follows. F(1)F(0) ATP synthase produces ATP from ADP in the presence of a proton or sodium gradient. F-type ATPases consist of two structural domains, F(1) containing the extramembraneous catalytic core and F(0) containing the membrane proton channel, linked together by a central stalk and a peripheral stalk. During catalysis, ATP synthesis in the catalytic domain of F(1) is coupled via a rotary mechanism of the central stalk subunits to proton translocation. Functionally, this protein is part of the stalk that links CF(0) to CF(1). It either transmits conformational changes from CF(0) to CF(1) or is implicated in proton conduction. This is ATP synthase subunit delta from Xylella fastidiosa (strain M23).